The primary structure comprises 373 residues: P2Y purinoceptor 1 (373 aa).

Residues 1 to 51 (MTEVLWPAAPNGTDAAFLASPGFHWGNSTATSTAAAAAPFRCALTKTGFQF) lie on the Extracellular side of the membrane. Asn-11 and Asn-27 each carry an N-linked (GlcNAc...) asparagine glycan. Disulfide bonds link Cys-42–Cys-296 and Cys-124–Cys-202. Lys-46 contacts ADP. A helical transmembrane segment spans residues 52–74 (YYLPAVYIVVFIIGFLGNSIAIW). The Cytoplasmic portion of the chain corresponds to 75–87 (MFVFHMKPWSGIS). The helical transmembrane segment at 88–109 (VYMFNLALADFLYVLTLPALIF) threads the bilayer. Residues 110-125 (YYFNKTNWIFGDAMCK) are Extracellular-facing. Asn-113 is a glycosylation site (N-linked (GlcNAc...) asparagine). A helical transmembrane segment spans residues 126-147 (LQRFIFHVNLYGSILFLTCISA). Topologically, residues 148-166 (HRYSGVVYPLKSLGRLKKK) are cytoplasmic. The helical transmembrane segment at 167-188 (NAVYISVLVWLIVVVAISPILF) threads the bilayer. The Extracellular segment spans residues 189–214 (YSGTGIRKNKTITCYDTTSDEYLRSY). N-linked (GlcNAc...) asparagine glycosylation is present at Asn-197. 203 to 205 (YDT) lines the ADP pocket. A helical membrane pass occupies residues 215-237 (FIYSMCTTVAMFCVPLVLILGCY). Residues 238 to 260 (GLIVRALIYKDLDNSPLRRKSIY) are Cytoplasmic-facing. Residues 261–284 (LVIIVLTVFAVSYIPFHVMKTMNL) form a helical membrane-spanning segment. ADP-binding positions include 283–287 (NLRAR), 303–306 (YATY), and Arg-310. Residues 285 to 303 (RARLDFQTPEMCTFNDRVY) lie on the Extracellular side of the membrane. Residues 304–325 (ATYQVTRGLASLNSCVDPILYF) form a helical membrane-spanning segment. The Cytoplasmic portion of the chain corresponds to 326–373 (LAGDTFRRRLSRATRKASRRSEANLQSKSEDMTLNILSEFKQNGDTSL).

This sequence belongs to the G-protein coupled receptor 1 family.

The protein resides in the cell membrane. In terms of biological role, receptor for extracellular adenine nucleotides such as ADP. In platelets, binding to ADP leads to mobilization of intracellular calcium ions via activation of phospholipase C, a change in platelet shape, and ultimately platelet aggregation. The sequence is that of P2Y purinoceptor 1 (P2RY1) from Cavia porcellus (Guinea pig).